The sequence spans 109 residues: Nucleoid-associated protein Ssed_2851 (109 aa).

The protein belongs to the YbaB/EbfC family. Homodimer.

It is found in the cytoplasm. It localises to the nucleoid. Binds to DNA and alters its conformation. May be involved in regulation of gene expression, nucleoid organization and DNA protection. In Shewanella sediminis (strain HAW-EB3), this protein is Nucleoid-associated protein Ssed_2851.